The primary structure comprises 564 residues: MTAVAPRLENYAEPTRPAPTGGARKGTLAWKMLTTTDHKLLGMMYIVMSFVWFFVGGLMALLIRAELFSPGLQFLSNEQFNQLFTLHGTIMLLAFGTPVVWGFSNYILPLQIGAPDVAFPRLNAFGFWITQIGVVAMLAGFLTPGGAADFGWTMYLPLADSIHSPGVGGDFWIIGVGATGVGTIASAVNMITTILCMRAPGMTMFRMPIFCWNIFVASVIVLLIFPLLTAAALGVMYDRKLGGHIYDPGNGGAILWQHLFWFFGHPEVYVLALPFFGIVSEVIPVFARKPMFGYIGLVFATLSIGMLSMAVWAHHMFVTGAILLPFFSFMTFLISVPTGVKFFNWLGTMWRGHISWETPMTWTMGFLVTFLFGGLTGIMLASPPLDFHISDTYFVVAHFHYTLFGTVVFASYAGVYFWFPKMTGRMLDERLGKIHFWITFVGFHGTFLVQHWVGNEGMPRRYADYLESDGFTTLNQISTVFSFLLGVSVIPFIWNVFKSYRYGEIVTVDDPWGYGNSLEWATSCPPPRHNFTSLPRIRSERPAFELHYPHMVERMRREAHIGHH.

The disordered stretch occupies residues 1–23 (MTAVAPRLENYAEPTRPAPTGGA). The next 7 membrane-spanning stretches (helical) occupy residues 43–63 (MMYI…ALLI), 83–103 (LFTL…VWGF), 122–142 (LNAF…AGFL), 171–191 (FWII…VNMI), 214–234 (IFVA…AALG), 259–279 (LFWF…FGIV), and 292–312 (FGYI…MAVW). H87 provides a ligand contact to Fe(II)-heme a. The Cu cation site is built by H265 and Y269. The segment at residues 265–269 (HPEVY) is a cross-link (1'-histidyl-3'-tyrosine (His-Tyr)). Cu cation contacts are provided by H314 and H315. Helical transmembrane passes span 316-336 (MFVT…LISV) and 360-380 (MTWT…GIML). Position 398 (H398) interacts with heme a3. Helical transmembrane passes span 399 to 419 (FHYT…YFWF), 434 to 454 (IHFW…HWVG), and 477 to 497 (ISTV…WNVF). H400 provides a ligand contact to Fe(II)-heme a.

This sequence belongs to the heme-copper respiratory oxidase family. As to quaternary structure, associates with subunits II, III and IV to form cytochrome c oxidase. Cu(2+) is required as a cofactor. Requires heme as cofactor.

It localises to the cell membrane. It catalyses the reaction 4 Fe(II)-[cytochrome c] + O2 + 8 H(+)(in) = 4 Fe(III)-[cytochrome c] + 2 H2O + 4 H(+)(out). The protein operates within energy metabolism; oxidative phosphorylation. Functionally, cytochrome c oxidase is the component of the respiratory chain that catalyzes the reduction of oxygen to water. Subunits 1-3 form the functional core of the enzyme complex. CO I is the catalytic subunit of the enzyme. Electrons originating in cytochrome c are transferred via the copper A center of subunit 2 and heme A of subunit 1 to the bimetallic center formed by heme A3 and copper B. The polypeptide is Cytochrome c oxidase subunit 1 (ctaD) (Corynebacterium diphtheriae (strain ATCC 700971 / NCTC 13129 / Biotype gravis)).